The sequence spans 354 residues: Guanine nucleotide-binding protein G(t) subunit alpha-2 (354 aa).

A disordered region spans residues 1-27 (MGSGASAEDKELAKRSKELEKKLQEDA). Gly2 is lipidated: N-myristoyl glycine. Residues 7-27 (AEDKELAKRSKELEKKLQEDA) are compositionally biased toward basic and acidic residues. The G-alpha domain occupies 32–354 (KTVKLLLLGA…KENLKDCGLF (323 aa)). Residues 35–48 (KLLLLGAGESGKST) form a G1 motif region. GTP contacts are provided by residues 40–47 (GAGESGKS), 175–181 (LRSRVKT), 200–204 (DVGGQ), 269–272 (NKKD), and Ala326. Ser47 and Thr181 together coordinate Mg(2+). Residues 173-181 (DVLRSRVKT) are G2 motif. A G3 motif region spans residues 196 to 205 (FRMFDVGGQR). Residues 265–272 (VLFLNKKD) form a G4 motif region. The G5 motif stretch occupies residues 324-329 (TCATDT).

Belongs to the G-alpha family. G(i/o/t/z) subfamily. In terms of assembly, g proteins are composed of 3 units; alpha, beta and gamma. The alpha chain contains the guanine nucleotide binding site. As to expression, retinal rod outer segment.

It localises to the cell projection. Its subcellular location is the cilium. It is found in the photoreceptor outer segment. The protein localises to the photoreceptor inner segment. Its function is as follows. Guanine nucleotide-binding proteins (G proteins) are involved as modulators or transducers in various transmembrane signaling systems. Transducin is an amplifier and one of the transducers of a visual impulse that performs the coupling between rhodopsin and cGMP-phosphodiesterase. The chain is Guanine nucleotide-binding protein G(t) subunit alpha-2 (GNAT2) from Bos taurus (Bovine).